Consider the following 343-residue polypeptide: Olfactory receptor 1E3 (343 aa).

Residues 1–28 (MMKKNQTMISEFLLLGLPIQPEQQNLFY) lie on the Extracellular side of the membrane. Asparagine 5 carries an N-linked (GlcNAc...) asparagine glycan. The chain crosses the membrane as a helical span at residues 29–49 (ALFLAVYLTTLLGNLLVIVLI). The Cytoplasmic segment spans residues 50–107 (RLDSHLHMPMYLCLSNLSFSDLCFSSVTMPKLLQNMQSQNPSIPFADCLAQMYFHLFY). A disulfide bond links cysteine 97 and cysteine 179. Residues 108–128 (GVLESFLLVVMAYHCYVAICF) traverse the membrane as a helical segment. Over 129–141 (PLHYTTIMSPKCC) the chain is Extracellular. The helical transmembrane segment at 142–162 (LGLLTLSWLLTTAHATLHTLL) threads the bilayer. Over 163-195 (MARLSFCAENVIPHFFCDTSTLLKLACSNTQVN) the chain is Cytoplasmic. Residues 196–216 (GWVMFFMGGLILVIPFLLLIM) form a helical membrane-spanning segment. Residues 217-242 (SCARIVSTILRVPSTGGIQKAFSTCG) are Extracellular-facing. A helical membrane pass occupies residues 243–263 (PHLSVVSLFYGTIIGLYLCPL). Residues 264-271 (TNHNTVKD) are Cytoplasmic-facing. The helical transmembrane segment at 272-292 (TVMAVMYTGVTHMLNPFIYSL) threads the bilayer. The Extracellular portion of the chain corresponds to 293-310 (RNRDMRGNPGQSLQHKEN). A helical transmembrane segment spans residues 311–331 (FFVFKIVIVGILPLLNLVGVV). Over 332-343 (KLIMKYHSKSVA) the chain is Cytoplasmic.

The protein belongs to the G-protein coupled receptor 1 family.

It localises to the cell membrane. Functionally, odorant receptor. In Homo sapiens (Human), this protein is Olfactory receptor 1E3 (OR1E3).